We begin with the raw amino-acid sequence, 303 residues long: N-acetyl-D-glucosamine kinase (303 aa).

Residues 4–11 and 133–140 contribute to the ATP site; these read GFDIGGTK and GVGGGLVL. His-157, Cys-177, Cys-179, and Cys-184 together coordinate Zn(2+).

It belongs to the ROK (NagC/XylR) family. NagK subfamily.

The enzyme catalyses N-acetyl-D-glucosamine + ATP = N-acetyl-D-glucosamine 6-phosphate + ADP + H(+). It functions in the pathway cell wall biogenesis; peptidoglycan recycling. In terms of biological role, catalyzes the phosphorylation of N-acetyl-D-glucosamine (GlcNAc) derived from cell-wall degradation, yielding GlcNAc-6-P. The polypeptide is N-acetyl-D-glucosamine kinase (Salmonella choleraesuis (strain SC-B67)).